The primary structure comprises 174 residues: RNA pyrophosphohydrolase (174 aa).

In terms of domain architecture, Nudix hydrolase spans 6–149 (GYRPNVGIVI…KRDVYRRALK (144 aa)). A Nudix box motif is present at residues 38–59 (GGIDEGETPEQAMYRELYEEVG).

This sequence belongs to the Nudix hydrolase family. RppH subfamily. A divalent metal cation serves as cofactor.

Its function is as follows. Accelerates the degradation of transcripts by removing pyrophosphate from the 5'-end of triphosphorylated RNA, leading to a more labile monophosphorylated state that can stimulate subsequent ribonuclease cleavage. This is RNA pyrophosphohydrolase from Photobacterium profundum (strain SS9).